The following is a 484-amino-acid chain: Probable sphingolipid transporter spinster homolog 2 (484 aa).

The disordered stretch occupies residues 1-23 (MDVDGEGDRGQNPRIMERDSDSI). The helical transmembrane segment at 38-58 (LLFVFCVVNLINYIDRGAIAS) threads the bilayer. Residues N62 and N85 are each glycosylated (N-linked (GlcNAc...) asparagine). A run of 11 helical transmembrane segments spans residues 93-113 (VLSSAFMVGLLVASPIFASLA), 122-142 (IGVGLSIWTLAVIGCGLSFDF), 147-167 (ICRMFVGVGEASFVSLAAPFI), 181-201 (AVFYMCIPTGYAFGYVYGGVV), 209-229 (AAFWGEAILMLPFAVLGFVIK), 273-293 (VYVTNILGYIAYNFVLGAYSY), 311-331 (IFGGVTVVCGIVGTLSGGVIL), 345-362 (LSVSTFIGAIFCFAAFCF), 377-397 (LLVFATQGPVNFIVLHCVKPS), 405-425 (MSTVSIHIFGDVPSSPLVGVL), and 436-456 (SLVLTFVLFPAAAIWSIGIFL). S466 bears the Phosphoserine mark.

Belongs to the major facilitator superfamily. Spinster (TC 2.A.1.49) family.

Its subcellular location is the late endosome membrane. The protein localises to the lysosome membrane. Probable sphingolipid transporter that plays a central role in endosomes and/or lysosomes storage. This is Probable sphingolipid transporter spinster homolog 2 from Arabidopsis thaliana (Mouse-ear cress).